Here is a 1050-residue protein sequence, read N- to C-terminus: Diacylglycerol kinase iota (1050 aa).

3 disordered regions span residues 53–74 (PSSS…GSGA), 92–111 (AAAA…EKEE), and 328–356 (SLKA…ETKG). A compositionally biased stretch (low complexity) spans 92 to 105 (AAAAAALEEPAAAG). A compositionally biased stretch (basic residues) spans 332-347 (SNRKKKRTSFKRKASK). A DAGKc domain is found at 367–502 (PLMKPLLVFV…DRWNLHVERN (136 aa)). 2 ANK repeats span residues 943–972 (GHCS…AELL) and 979–1008 (TGET…SLRQ). Positions 1048–1050 (TAV) match the PDZ-binding motif.

It belongs to the eukaryotic diacylglycerol kinase family. In terms of assembly, interacts (via PDZ-binding motif) with DLG4; controls the localization of DGKI to the synapse. Interacts (via PDZ-binding motif) with DLG1. Interacts (via PDZ-binding motif) with DLG2. Interacts (via PDZ-binding motif) with DLG3. May interact with RASGRP3; involved in the regulation of RASGRP3 activity. In brain, expressed in the hippocampus and cerebellum with stronger expression in the Purkinje cell layer (at protein level). Expressed in kidney.

Its subcellular location is the cell projection. It is found in the axon. It localises to the dendrite. The protein localises to the presynapse. The protein resides in the postsynapse. Its subcellular location is the postsynaptic density. It is found in the synaptic cell membrane. It localises to the cytoplasmic vesicle. The protein localises to the secretory vesicle. The protein resides in the synaptic vesicle membrane. Its subcellular location is the cytoplasm. It is found in the cytosol. It localises to the nucleus. The enzyme catalyses a 1,2-diacyl-sn-glycerol + ATP = a 1,2-diacyl-sn-glycero-3-phosphate + ADP + H(+). It catalyses the reaction 1,2-di-(9Z-octadecenoyl)-sn-glycerol + ATP = 1,2-di-(9Z-octadecenoyl)-sn-glycero-3-phosphate + ADP + H(+). It carries out the reaction 1-octadecanoyl-2-(5Z,8Z,11Z,14Z-eicosatetraenoyl)-sn-glycerol + ATP = 1-octadecanoyl-2-(5Z,8Z,11Z,14Z-eicosatetraenoyl)-sn-glycero-3-phosphate + ADP + H(+). The catalysed reaction is 1-octadecanoyl-2-(9Z,12Z)-octadecadienoyl-sn-glycerol + ATP = 1-octadecanoyl-2-(9Z,12Z-octadecadienoyl)-sn-glycero-3-phosphate + ADP + H(+). It functions in the pathway lipid metabolism; glycerolipid metabolism. Its function is as follows. Diacylglycerol kinase that converts diacylglycerol/DAG into phosphatidic acid/phosphatidate/PA and regulates the respective levels of these two bioactive lipids. Thereby, acts as a central switch between the signaling pathways activated by these second messengers with different cellular targets and opposite effects in numerous biological processes. Has probably no preference for any of the diacylglycerols in terms of the acyl chain composition, especially for the acyl chain at the sn-2 position. By controlling the diacylglycerol/DAG-mediated activation of RASGRP3, negatively regulates the Rap1 signaling pathway. May play a role in presynaptic diacylglycerol/DAG signaling and control neurotransmitter release during metabotropic glutamate receptor-dependent long-term depression. In Mus musculus (Mouse), this protein is Diacylglycerol kinase iota.